The primary structure comprises 125 residues: MPHSSDSSDSSFSRSPPPGKQDSSDDVRRVQRREKNRIAAQKSRQRQTQKADTLHLESEDLEKQNAALRKEIKQLTEELKYFTSVLNSHEPLCSVLAASTPSPPEVVYSAHAFHQPHVSSPRFQP.

Residues 1-14 (MPHSSDSSDSSFSR) show a composition bias toward low complexity. A disordered region spans residues 1–58 (MPHSSDSSDSSFSRSPPPGKQDSSDDVRRVQRREKNRIAAQKSRQRQTQKADTLHLES). Positions 26–89 (DVRRVQRREK…KYFTSVLNSH (64 aa)) constitute a bZIP domain. The interval 28–50 (RRVQRREKNRIAAQKSRQRQTQK) is basic motif. At S43 the chain carries Phosphoserine. At T48 the chain carries Phosphothreonine. The tract at residues 54 to 75 (LHLESEDLEKQNAALRKEIKQL) is leucine-zipper.

This sequence belongs to the bZIP family. Heterodimer; mainly heterodimerizes with JUNB. The BATF-JUNB heterodimer interacts with IRF4 and IRF8. Interacts (via bZIP domain) with IRF4 and IRF8; the interaction is direct. Also forms heterodimers with JUN and JUND. Also interacts with IFI35. In terms of processing, phosphorylated on serine and threonine residues and at least one tyrosine residue. Phosphorylation at Ser-43 inhibit DNA binding activity and transforms it as a negative regulator of AP-1 mediated transcription. Phosphorylated. In terms of tissue distribution, expressed at highest levels in lung, and at lower levels in placenta, liver, kidney, spleen, and peripheral blood. Detected in SW480 colorectal cancer cell line and several hematopoietic tumor cell lines, including Raji Burkitt's lymphoma. Strongly expressed in mature B- and T-lymphocytes. Also expressed in moderate levels in lymph node and appendix and at low levels in thymus and bone marrow.

It localises to the nucleus. The protein localises to the cytoplasm. AP-1 family transcription factor that controls the differentiation of lineage-specific cells in the immune system: specifically mediates the differentiation of T-helper 17 cells (Th17), follicular T-helper cells (TfH), CD8(+) dendritic cells and class-switch recombination (CSR) in B-cells. Acts via the formation of a heterodimer with JUNB that recognizes and binds DNA sequence 5'-TGA[CG]TCA-3'. The BATF-JUNB heterodimer also forms a complex with IRF4 (or IRF8) in immune cells, leading to recognition of AICE sequence (5'-TGAnTCA/GAAA-3'), an immune-specific regulatory element, followed by cooperative binding of BATF and IRF4 (or IRF8) and activation of genes. Controls differentiation of T-helper cells producing interleukin-17 (Th17 cells) by binding to Th17-associated gene promoters: regulates expression of the transcription factor RORC itself and RORC target genes such as IL17 (IL17A or IL17B). Also involved in differentiation of follicular T-helper cells (TfH) by directing expression of BCL6 and MAF. In B-cells, involved in class-switch recombination (CSR) by controlling the expression of both AICDA and of germline transcripts of the intervening heavy-chain region and constant heavy-chain region (I(H)-C(H)). Following infection, can participate in CD8(+) dendritic cell differentiation via interaction with IRF4 and IRF8 to mediate cooperative gene activation. Regulates effector CD8(+) T-cell differentiation by regulating expression of SIRT1. Following DNA damage, part of a differentiation checkpoint that limits self-renewal of hematopoietic stem cells (HSCs): up-regulated by STAT3, leading to differentiation of HSCs, thereby restricting self-renewal of HSCs. This is Basic leucine zipper transcriptional factor ATF-like (BATF) from Homo sapiens (Human).